The sequence spans 644 residues: Coiled-coil domain-containing protein 22 homolog (644 aa).

The tract at residues 316–341 is disordered; that stretch reads DEQKAAAMAGLSESGPPKMDTEEELQ. 3 coiled-coil regions span residues 333 to 383, 409 to 486, and 592 to 644; these read KMDT…NEQV, DAEN…GKDD, and GVIM…LKSS.

The protein belongs to the CCDC22 family.

This chain is Coiled-coil domain-containing protein 22 homolog, found in Nematostella vectensis (Starlet sea anemone).